Consider the following 200-residue polypeptide: ATP-dependent Clp protease proteolytic subunit (200 aa).

Ser-102 serves as the catalytic Nucleophile. His-127 is an active-site residue.

Belongs to the peptidase S14 family. Fourteen ClpP subunits assemble into 2 heptameric rings which stack back to back to give a disk-like structure with a central cavity, resembling the structure of eukaryotic proteasomes.

It is found in the cytoplasm. The enzyme catalyses Hydrolysis of proteins to small peptides in the presence of ATP and magnesium. alpha-casein is the usual test substrate. In the absence of ATP, only oligopeptides shorter than five residues are hydrolyzed (such as succinyl-Leu-Tyr-|-NHMec, and Leu-Tyr-Leu-|-Tyr-Trp, in which cleavage of the -Tyr-|-Leu- and -Tyr-|-Trp bonds also occurs).. In terms of biological role, cleaves peptides in various proteins in a process that requires ATP hydrolysis. Has a chymotrypsin-like activity. Plays a major role in the degradation of misfolded proteins. The protein is ATP-dependent Clp protease proteolytic subunit of Dehalococcoides mccartyi (strain ATCC BAA-2100 / JCM 16839 / KCTC 5957 / BAV1).